Consider the following 402-residue polypeptide: uncharacterized protein (402 aa).

To M.genitalium MG148.

This is an uncharacterized protein from Caldicellulosiruptor sp. (strain Rt8B.4).